A 139-amino-acid chain; its full sequence is Ribulose bisphosphate carboxylase small subunit (139 aa).

The protein belongs to the RuBisCO small chain family. In terms of assembly, heterohexadecamer of 8 large and 8 small subunits.

It localises to the plastid. The protein localises to the chloroplast. RuBisCO catalyzes two reactions: the carboxylation of D-ribulose 1,5-bisphosphate, the primary event in carbon dioxide fixation, as well as the oxidative fragmentation of the pentose substrate in the photorespiration process. Both reactions occur simultaneously and in competition at the same active site. Although the small subunit is not catalytic it is essential for maximal activity. The sequence is that of Ribulose bisphosphate carboxylase small subunit from Guillardia theta (Cryptophyte).